A 517-amino-acid chain; its full sequence is Crotonobetaine/carnitine--CoA ligase (517 aa).

It belongs to the ATP-dependent AMP-binding enzyme family.

The catalysed reaction is 4-(trimethylamino)butanoate + ATP + CoA = 4-(trimethylamino)butanoyl-CoA + AMP + diphosphate. The enzyme catalyses crotonobetaine + ATP + CoA = crotonobetainyl-CoA + AMP + diphosphate. It catalyses the reaction (R)-carnitine + ATP + CoA = (R)-carnitinyl-CoA + AMP + diphosphate. It participates in amine and polyamine metabolism; carnitine metabolism. Catalyzes the transfer of CoA to carnitine, generating the initial carnitinyl-CoA needed for the CaiB reaction cycle. Also has activity toward crotonobetaine and gamma-butyrobetaine. The sequence is that of Crotonobetaine/carnitine--CoA ligase from Salmonella paratyphi C (strain RKS4594).